Here is a 275-residue protein sequence, read N- to C-terminus: MSSTPSNQNIIPIIKKESIVSLFEKGIRQDGRKLTDYRPLSITLDYAKKADGSALVKLGTTMVLAGTKLEIDKPYEDTPNQGNLIVNVELLPLAYETFEPGPPDENAIELARVVDRSLRDSKALDLTKLVIEPGKSVWTVWLDVYVLDYGGNVLDACTLASVAALYNTKVYKVEQHSNGISVNKNEVVGKLPLNYPVVTISVAKVDKYLVVDPDLDEESIMDAKISFSYTPDLKIVGIQKSGKGSMSLQDIDQAENTARSTAVKLLEELKKHLGI.

This sequence belongs to the RNase PH family. Rrp42 subfamily. As to quaternary structure, component of the archaeal exosome complex. Forms a hexameric ring-like arrangement composed of 3 Rrp41-Rrp42 heterodimers. The hexameric ring associates with a trimer of Rrp4 and/or Csl4 subunits.

It localises to the cytoplasm. Functionally, non-catalytic component of the exosome, which is a complex involved in RNA degradation. Contributes to the structuring of the Rrp41 active site. The sequence is that of Exosome complex component Rrp42 from Saccharolobus solfataricus (strain ATCC 35092 / DSM 1617 / JCM 11322 / P2) (Sulfolobus solfataricus).